The chain runs to 198 residues: DNA polymerase zeta subunit 2 (198 aa).

The region spanning 4-196 (EIKADIIVEA…DLGLKMDVLI (193 aa)) is the HORMA domain.

This sequence belongs to the MAD2 family. As to quaternary structure, accessory subunit of the zeta DNA polymerase complex, which consists of the catalytic component PolZ1/DNApol-zeta and PolZ2/Rev7. Interacts with the apurinic/apyrimidinic (AP) endonuclease Rrp1 (via the N-terminus).

As the accessory component of the DNA polymerase zeta complex, involved in translesion DNA synthesis (TLS) and various DNA repair mechanisms. Promotes the apurinic/apyrimidinic (AP) endonuclease activity of Rrp1 and is therefore likely to be involved in the base excision repair (BER) pathway responsible for repair of DNA lesions. It does not appear to influence the synthesis activity of the catalytic component Dmpol-zeta. This is DNA polymerase zeta subunit 2 from Drosophila melanogaster (Fruit fly).